Reading from the N-terminus, the 305-residue chain is N-acetylmuramic acid 6-phosphate etherase (305 aa).

One can recognise an SIS domain in the interval 59–222 (TSKALGKGGR…STGVMVKLGK (164 aa)). Glutamate 87 (proton donor) is an active-site residue. Glutamate 118 is a catalytic residue.

This sequence belongs to the GCKR-like family. MurNAc-6-P etherase subfamily. Homodimer.

It catalyses the reaction N-acetyl-D-muramate 6-phosphate + H2O = N-acetyl-D-glucosamine 6-phosphate + (R)-lactate. It functions in the pathway amino-sugar metabolism; N-acetylmuramate degradation. In terms of biological role, specifically catalyzes the cleavage of the D-lactyl ether substituent of MurNAc 6-phosphate, producing GlcNAc 6-phosphate and D-lactate. This Crocosphaera subtropica (strain ATCC 51142 / BH68) (Cyanothece sp. (strain ATCC 51142)) protein is N-acetylmuramic acid 6-phosphate etherase.